Reading from the N-terminus, the 292-residue chain is ATP synthase gamma chain (292 aa).

It belongs to the ATPase gamma chain family. As to quaternary structure, F-type ATPases have 2 components, CF(1) - the catalytic core - and CF(0) - the membrane proton channel. CF(1) has five subunits: alpha(3), beta(3), gamma(1), delta(1), epsilon(1). CF(0) has three main subunits: a, b and c.

It is found in the cell membrane. Its function is as follows. Produces ATP from ADP in the presence of a proton gradient across the membrane. The gamma chain is believed to be important in regulating ATPase activity and the flow of protons through the CF(0) complex. The chain is ATP synthase gamma chain from Prosthecochloris aestuarii (strain DSM 271 / SK 413).